Consider the following 144-residue polypeptide: Large ribosomal subunit protein uL13 (144 aa).

This sequence belongs to the universal ribosomal protein uL13 family. Part of the 50S ribosomal subunit.

Functionally, this protein is one of the early assembly proteins of the 50S ribosomal subunit, although it is not seen to bind rRNA by itself. It is important during the early stages of 50S assembly. This Clostridium perfringens (strain 13 / Type A) protein is Large ribosomal subunit protein uL13.